Here is a 120-residue protein sequence, read N- to C-terminus: MIF-like protein mif-2 (120 aa).

The protein belongs to the MIF family.

The protein is MIF-like protein mif-2 (mif-2) of Caenorhabditis elegans.